A 314-amino-acid chain; its full sequence is Ribosomal RNA small subunit methyltransferase A (314 aa).

Positions 29, 31, 56, 77, 107, and 126 each coordinate S-adenosyl-L-methionine. Residues 291-314 (PKADDAGDDADAQAKADGAQVSTL) are disordered. Residues 303-314 (QAKADGAQVSTL) are compositionally biased toward low complexity.

The protein belongs to the class I-like SAM-binding methyltransferase superfamily. rRNA adenine N(6)-methyltransferase family. RsmA subfamily.

It is found in the cytoplasm. The catalysed reaction is adenosine(1518)/adenosine(1519) in 16S rRNA + 4 S-adenosyl-L-methionine = N(6)-dimethyladenosine(1518)/N(6)-dimethyladenosine(1519) in 16S rRNA + 4 S-adenosyl-L-homocysteine + 4 H(+). Specifically dimethylates two adjacent adenosines (A1518 and A1519) in the loop of a conserved hairpin near the 3'-end of 16S rRNA in the 30S particle. May play a critical role in biogenesis of 30S subunits. The protein is Ribosomal RNA small subunit methyltransferase A of Mycolicibacterium gilvum (strain PYR-GCK) (Mycobacterium gilvum (strain PYR-GCK)).